The chain runs to 329 residues: DNA-directed RNA polymerase subunit alpha (329 aa).

The interval 1 to 235 is alpha N-terminal domain (alpha-NTD); sequence MQGSVTEFLK…EQLEAFVDLR (235 aa). The segment at 249–329 is alpha C-terminal domain (alpha-CTD); sequence FDPILLRPVD…NWPPASIADE (81 aa).

This sequence belongs to the RNA polymerase alpha chain family. As to quaternary structure, homodimer. The RNAP catalytic core consists of 2 alpha, 1 beta, 1 beta' and 1 omega subunit. When a sigma factor is associated with the core the holoenzyme is formed, which can initiate transcription.

The enzyme catalyses RNA(n) + a ribonucleoside 5'-triphosphate = RNA(n+1) + diphosphate. Functionally, DNA-dependent RNA polymerase catalyzes the transcription of DNA into RNA using the four ribonucleoside triphosphates as substrates. The protein is DNA-directed RNA polymerase subunit alpha of Pectobacterium atrosepticum (strain SCRI 1043 / ATCC BAA-672) (Erwinia carotovora subsp. atroseptica).